Consider the following 386-residue polypeptide: Circumsporozoite protein (386 aa).

The N-terminal stretch at Met1 to Cys22 is a signal peptide. Residues His51–Lys304 are disordered. Basic and acidic residues predominate over residues Asp72–Asp100. The tract at residues Lys80–Arg88 is required for the binding to heparan sulfate proteoglycans (HSPGs) on the surface of host hepatocytes. The segment at Lys91–Pro95 is region I; contains the proteolytic cleavage site. Tandem repeats lie at residues Gly96–Ala104, Gly105–Ala113, Gly114–Ala122, Gly123–Ala131, Gly132–Ala140, Gly141–Ala149, Gly150–Ala158, Gly159–Ala167, Gly168–Ala176, Gly177–Ala185, Gly186–Ala194, Gly195–Ala203, Gly204–Ala212, Gly213–Ala221, Gly222–Ala230, Gly231–Ala239, Gly240–Ala248, Gly249–Ala257, Gly258–Ala266, and Gly267–Ala275. A 20 X 9 AA tandem repeats of G-D-R-A-[AD]-G-Q-P-A region spans residues Gly96 to Ala275. The segment covering Ala275–Gly292 has biased composition (gly residues). Over residues Gln293–Glu303 the composition is skewed to low complexity. In terms of domain architecture, TSP type-1 spans Lys312–Ala364. Disulfide bonds link Cys324–Cys358 and Cys328–Cys363. Thr327 carries O-linked (Fuc) threonine glycosylation. Cys363 carries the GPI-anchor amidated cysteine lipid modification. A propeptide spans Ala364–Asn386 (removed in mature form).

Belongs to the plasmodium circumsporozoite protein family. Post-translationally, during host cell invasion, proteolytically cleaved at the cell membrane in the region I by a papain-like cysteine protease of parasite origin. Cleavage is triggered by the sporozoite contact with highly sulfated heparan sulfate proteoglycans (HSPGs) present on the host hepatocyte cell surface. Cleavage exposes the TSP type-1 (TSR) domain and is required for productive invasion of host hepatocytes but not for adhesion to the host cell membrane. Cleavage is dispensable for sporozoite development in the oocyst, motility and for traversal of host and vector cells. O-glycosylated; maybe by POFUT2.

Its subcellular location is the cell membrane. The protein localises to the cytoplasm. Functionally, essential sporozoite protein. In the mosquito vector, required for sporozoite development in the oocyst, migration through the vector hemolymph and entry into the vector salivary glands. In the vertebrate host, required for sporozoite migration through the host dermis and infection of host hepatocytes. Binds to highly sulfated heparan sulfate proteoglycans (HSPGs) on the surface of host hepatocytes. Its function is as follows. In the vertebrate host, binds to highly sulfated heparan sulfate proteoglycans (HSPGs) on the surface of host hepatocytes and is required for sporozoite invasion of the host hepatocytes. This is Circumsporozoite protein from Plasmodium simium.